Here is a 133-residue protein sequence, read N- to C-terminus: Fluoride-specific ion channel FluC (133 aa).

Transmembrane regions (helical) follow at residues 12 to 32 (LAMTGGALGSGLRFAIGASLI), 41 to 61 (WGTLTVNLLGSFVAGVLLVWL), 76 to 96 (IVGVIGGLTTFSSLMMECLVF), and 104 to 124 (MIGIYLAVTLLAGLALVVAGA). Positions 81 and 84 each coordinate Na(+).

This sequence belongs to the fluoride channel Fluc/FEX (TC 1.A.43) family.

The protein resides in the cell inner membrane. It carries out the reaction fluoride(in) = fluoride(out). Na(+) is not transported, but it plays an essential structural role and its presence is essential for fluoride channel function. Its function is as follows. Fluoride-specific ion channel. Important for reducing fluoride concentration in the cell, thus reducing its toxicity. The sequence is that of Fluoride-specific ion channel FluC from Xanthomonas euvesicatoria pv. vesicatoria (strain 85-10) (Xanthomonas campestris pv. vesicatoria).